An 85-amino-acid polypeptide reads, in one-letter code: Sec-independent protein translocase protein TatA (85 aa).

Residues 1–21 (MGSFSIWHWLIVLVIIMMVFG) form a helical membrane-spanning segment. A compositionally biased stretch (basic and acidic residues) spans 39 to 51 (FKDGMREGQEDKP). The tract at residues 39-85 (FKDGMREGQEDKPAGSQQPQQTAGQPPRELHDATTIDVEARDKSKQG) is disordered. The span at 53-62 (GSQQPQQTAG) shows a compositional bias: polar residues. The segment covering 66–85 (RELHDATTIDVEARDKSKQG) has biased composition (basic and acidic residues).

The protein belongs to the TatA/E family. As to quaternary structure, the Tat system comprises two distinct complexes: a TatABC complex, containing multiple copies of TatA, TatB and TatC subunits, and a separate TatA complex, containing only TatA subunits. Substrates initially bind to the TatABC complex, which probably triggers association of the separate TatA complex to form the active translocon.

Its subcellular location is the cell inner membrane. Part of the twin-arginine translocation (Tat) system that transports large folded proteins containing a characteristic twin-arginine motif in their signal peptide across membranes. TatA could form the protein-conducting channel of the Tat system. This is Sec-independent protein translocase protein TatA from Ralstonia pickettii (strain 12J).